The chain runs to 359 residues: Medium-wave-sensitive opsin 1 (359 aa).

Topologically, residues 1–47 are extracellular; sequence MAQRLTGEQTLDHYEDSTHASIFTYTNSNSTKGPFEGPNYHIAPRWV. Positions 12–38 are required for 11-cis-retinal regeneration; the sequence is DHYEDSTHASIFTYTNSNSTKGPFEGP. Asn-29 carries N-linked (GlcNAc...) asparagine glycosylation. The helical transmembrane segment at 48–72 threads the bilayer; that stretch reads YHLTSTWMILVVVASVFTNGLVLAA. Topologically, residues 73–84 are cytoplasmic; the sequence is TMRFKKLRHPLN. The helical transmembrane segment at 85 to 110 threads the bilayer; it reads WILVNLAVADLAETIIASTISVVNQI. Residues 111-124 lie on the Extracellular side of the membrane; the sequence is YGYFVLGHPLCVIE. The cysteines at positions 121 and 198 are disulfide-linked. The helical transmembrane segment at 125 to 144 threads the bilayer; the sequence is GYIVSLCGITGLWSLAIISW. Residues 145 to 163 are Cytoplasmic-facing; sequence ERWLVVCKPFGNVRFDAKL. A helical membrane pass occupies residues 164–187; the sequence is ATVGIVFSWVWAAIWTAPPIFGWS. The Extracellular segment spans residues 188 to 213; it reads RYWPYGLKTSCGPDVFSGTSYPGVQS. A helical membrane pass occupies residues 214-241; it reads YMMVLMVTCCIFPLSIIVLCYLQVWLAI. Topologically, residues 242 to 263 are cytoplasmic; it reads RAVAKQQKESESTQKAEKEVTR. Residues 264-287 traverse the membrane as a helical segment; that stretch reads MVVVMVFAYCLCWGPYTFFACFAT. The Extracellular segment spans residues 288–295; it reads AHPGYAFH. Residues 296–320 traverse the membrane as a helical segment; sequence PLVASLPSYFAKSATIYNPIIYVFM. N6-(retinylidene)lysine is present on Lys-307. Topologically, residues 321 to 359 are cytoplasmic; sequence NRQFRNCILHLFGKKVDDSSELSSTSKTEVSSVSSVSPA.

The protein belongs to the G-protein coupled receptor 1 family. Opsin subfamily. Monomer. Homodimer. Homotetramer. N-glycosylated. O-glycosylated. Post-translationally, phosphorylated on some or all of the serine and threonine residues present in the C-terminal region. In terms of tissue distribution, expressed in retina (at protein level). Expressed in cone photoreceptor cells (at protein level).

It localises to the cell membrane. Its function is as follows. Visual pigments are the light-absorbing molecules that mediate vision. They consist of an apoprotein, opsin, covalently linked to cis-retinal. May increase spectral sensitivity in dim light. In Mus musculus (Mouse), this protein is Medium-wave-sensitive opsin 1 (Opn1mw).